Consider the following 795-residue polypeptide: Phenylalanine--tRNA ligase beta subunit (795 aa).

A tRNA-binding domain is found at 39–148 (AGSFHGVVVG…ADAPIGTDIR (110 aa)). In terms of domain architecture, B5 spans 401 to 476 (PKRATITLRR…RVYGYNNIPD (76 aa)). The Mg(2+) site is built by aspartate 454, aspartate 460, glutamate 463, and glutamate 464. An FDX-ACB domain is found at 701–794 (SRFPANRRDI…LKERFQASLR (94 aa)).

Belongs to the phenylalanyl-tRNA synthetase beta subunit family. Type 1 subfamily. In terms of assembly, tetramer of two alpha and two beta subunits. It depends on Mg(2+) as a cofactor.

The protein localises to the cytoplasm. The catalysed reaction is tRNA(Phe) + L-phenylalanine + ATP = L-phenylalanyl-tRNA(Phe) + AMP + diphosphate + H(+). The sequence is that of Phenylalanine--tRNA ligase beta subunit (pheT) from Escherichia coli (strain K12).